The chain runs to 208 residues: Ribonuclease HII (208 aa).

Positions 1 to 205 constitute an RNase H type-2 domain; it reads MIVVGIDEAG…LQEIAPNYYI (205 aa). Residues D7, E8, and D104 each contribute to the a divalent metal cation site.

It belongs to the RNase HII family. Mn(2+) serves as cofactor. The cofactor is Mg(2+).

Its subcellular location is the cytoplasm. The enzyme catalyses Endonucleolytic cleavage to 5'-phosphomonoester.. Its function is as follows. Endonuclease that specifically degrades the RNA of RNA-DNA hybrids. This chain is Ribonuclease HII, found in Sulfurisphaera tokodaii (strain DSM 16993 / JCM 10545 / NBRC 100140 / 7) (Sulfolobus tokodaii).